The chain runs to 279 residues: Lipid phosphate phosphatase epsilon 1, chloroplastic (279 aa).

A chloroplast-targeting transit peptide spans 1–88 (MAASSSLLLL…SFINNSSEIR (88 aa)). Helical transmembrane passes span 126 to 142 (LWAV…SVVL), 164 to 184 (SHAQ…MEWL), 185 to 205 (GTNG…SYFI), 219 to 239 (VVVG…MWNS), and 255 to 275 (VFLF…LNWF).

Belongs to the PA-phosphatase related phosphoesterase family. Expressed in root tips, root branch points, cotyledons and leaves.

It is found in the plastid. The protein localises to the chloroplast inner membrane. With respect to regulation, inhibited by Mg(2+). Functionally, exhibits phosphatidate phosphatase (PAP) activity in vitro. May play a secondary role as PAP in plastids. The chain is Lipid phosphate phosphatase epsilon 1, chloroplastic (LPPE1) from Arabidopsis thaliana (Mouse-ear cress).